Consider the following 194-residue polypeptide: Putative NAD(P)H nitroreductase YfhC (194 aa).

FMN is bound by residues 20–22, 147–148, and arginine 188; these read RRS and KI.

This sequence belongs to the nitroreductase family. FMN is required as a cofactor.

The protein is Putative NAD(P)H nitroreductase YfhC (yfhC) of Bacillus subtilis (strain 168).